Here is a 478-residue protein sequence, read N- to C-terminus: Glycogen synthase (478 aa).

Residue lysine 15 participates in ADP-alpha-D-glucose binding.

It belongs to the glycosyltransferase 1 family. Bacterial/plant glycogen synthase subfamily.

It catalyses the reaction [(1-&gt;4)-alpha-D-glucosyl](n) + ADP-alpha-D-glucose = [(1-&gt;4)-alpha-D-glucosyl](n+1) + ADP + H(+). Its pathway is glycan biosynthesis; glycogen biosynthesis. In terms of biological role, synthesizes alpha-1,4-glucan chains using ADP-glucose. The protein is Glycogen synthase of Clostridium botulinum (strain Eklund 17B / Type B).